We begin with the raw amino-acid sequence, 407 residues long: P2X receptor D (407 aa).

The Cytoplasmic portion of the chain corresponds to 1-22 (MDWDNIFSYNTAKIVTIKDRRL). The helical transmembrane segment at 23 to 43 (GGLHIIFMVLIIVYIVIYSTI) threads the bilayer. Topologically, residues 44–300 (YKKGYLLTET…IQNGEIGSFN (257 aa)) are lumenal. The interval 283–296 (RHGIRLIFIQNGEI) is pore-forming motif. A helical transmembrane segment spans residues 301–321 (FQALLLTFVSGLGLLAISTVL). Residues 322–407 (VDQLAIRFLP…QNIQNNNIIL (86 aa)) are Cytoplasmic-facing. The disordered stretch occupies residues 371 to 394 (KNNENNNNNDDYNDDDNEIFDDNN). Acidic residues predominate over residues 381-391 (DYNDDDNEIFD).

This sequence belongs to the P2X receptor family.

The protein localises to the contractile vacuole membrane. Functionally, P2X receptors are ligand-gated ion channels that play a role in intracellular calcium signaling. ATP does not evoke inward currents in p2xD. Not essential for osmoregulation. The chain is P2X receptor D (p2xD) from Dictyostelium discoideum (Social amoeba).